The following is a 125-amino-acid chain: Small ribosomal subunit protein uS13 (125 aa).

It belongs to the universal ribosomal protein uS13 family. In terms of assembly, part of the 30S ribosomal subunit. Forms a loose heterodimer with protein S19. Forms two bridges to the 50S subunit in the 70S ribosome.

Located at the top of the head of the 30S subunit, it contacts several helices of the 16S rRNA. In the 70S ribosome it contacts the 23S rRNA (bridge B1a) and protein L5 of the 50S subunit (bridge B1b), connecting the 2 subunits; these bridges are implicated in subunit movement. Contacts the tRNAs in the A and P-sites. The protein is Small ribosomal subunit protein uS13 of Rickettsia typhi (strain ATCC VR-144 / Wilmington).